Reading from the N-terminus, the 222-residue chain is Isoprenyl transferase (222 aa).

Residue Asp-12 is part of the active site. Asp-12 contributes to the Mg(2+) binding site. Substrate is bound by residues 13 to 16 (GNRR), Trp-17, and 57 to 59 (STE). Asn-60 serves as the catalytic Proton acceptor. Residues Trp-61, Arg-63, Arg-171, and 177 to 179 (RLS) each bind substrate. Glu-190 contacts Mg(2+).

This sequence belongs to the UPP synthase family. As to quaternary structure, homodimer. The cofactor is Mg(2+).

In terms of biological role, catalyzes the condensation of isopentenyl diphosphate (IPP) with allylic pyrophosphates generating different type of terpenoids. This is Isoprenyl transferase (uppS) from Campylobacter jejuni subsp. jejuni serotype O:2 (strain ATCC 700819 / NCTC 11168).